The sequence spans 380 residues: Putative glutamate--cysteine ligase 2-2 (380 aa).

The protein belongs to the glutamate--cysteine ligase type 2 family. YbdK subfamily.

It catalyses the reaction L-cysteine + L-glutamate + ATP = gamma-L-glutamyl-L-cysteine + ADP + phosphate + H(+). Its function is as follows. ATP-dependent carboxylate-amine ligase which exhibits weak glutamate--cysteine ligase activity. This is Putative glutamate--cysteine ligase 2-2 from Nocardia farcinica (strain IFM 10152).